The sequence spans 72 residues: Small, acid-soluble spore protein 1 (72 aa).

This sequence belongs to the alpha/beta-type SASP family.

Functionally, SASP are bound to spore DNA. They are double-stranded DNA-binding proteins that cause DNA to change to an a-like conformation. They protect the DNA backbone from chemical and enzymatic cleavage and are thus involved in dormant spore's high resistance to UV light. The polypeptide is Small, acid-soluble spore protein 1 (Sh-1) (Halobacillus halophilus (strain ATCC 35676 / DSM 2266 / JCM 20832 / KCTC 3685 / LMG 17431 / NBRC 102448 / NCIMB 2269) (Sporosarcina halophila)).